The sequence spans 619 residues: 1-deoxy-D-xylulose-5-phosphate synthase (619 aa).

Thiamine diphosphate is bound by residues H80 and 121–123; that span reads GHS. A Mg(2+)-binding site is contributed by D152. Thiamine diphosphate-binding positions include 153–154, N181, Y288, and E370; that span reads GA. N181 provides a ligand contact to Mg(2+).

Belongs to the transketolase family. DXPS subfamily. Homodimer. The cofactor is Mg(2+). Thiamine diphosphate serves as cofactor.

It carries out the reaction D-glyceraldehyde 3-phosphate + pyruvate + H(+) = 1-deoxy-D-xylulose 5-phosphate + CO2. The protein operates within metabolic intermediate biosynthesis; 1-deoxy-D-xylulose 5-phosphate biosynthesis; 1-deoxy-D-xylulose 5-phosphate from D-glyceraldehyde 3-phosphate and pyruvate: step 1/1. Functionally, catalyzes the acyloin condensation reaction between C atoms 2 and 3 of pyruvate and glyceraldehyde 3-phosphate to yield 1-deoxy-D-xylulose-5-phosphate (DXP). The protein is 1-deoxy-D-xylulose-5-phosphate synthase of Yersinia pseudotuberculosis serotype I (strain IP32953).